We begin with the raw amino-acid sequence, 316 residues long: tRNA dimethylallyltransferase (316 aa).

Position 17–24 (17–24 (GPTASGKT)) interacts with ATP. A substrate-binding site is contributed by 19-24 (TASGKT). Interaction with substrate tRNA stretches follow at residues 42 to 45 (DSAL), 166 to 170 (QRLSR), 247 to 252 (RCVGYR), and 280 to 287 (KRQITWLR).

The protein belongs to the IPP transferase family. Monomer. Mg(2+) is required as a cofactor.

It catalyses the reaction adenosine(37) in tRNA + dimethylallyl diphosphate = N(6)-dimethylallyladenosine(37) in tRNA + diphosphate. In terms of biological role, catalyzes the transfer of a dimethylallyl group onto the adenine at position 37 in tRNAs that read codons beginning with uridine, leading to the formation of N6-(dimethylallyl)adenosine (i(6)A). The protein is tRNA dimethylallyltransferase of Shigella boydii serotype 18 (strain CDC 3083-94 / BS512).